We begin with the raw amino-acid sequence, 485 residues long: Cytoplasmic tRNA 2-thiolation protein 2 (485 aa).

This sequence belongs to the CTU2/NCS2 family.

Its subcellular location is the cytoplasm. It participates in tRNA modification; 5-methoxycarbonylmethyl-2-thiouridine-tRNA biosynthesis. Its function is as follows. Plays a central role in 2-thiolation of mcm(5)S(2)U at tRNA wobble positions of tRNA(Lys), tRNA(Glu) and tRNA(Gln). May act by forming a heterodimer with NCS6 that ligates sulfur from thiocarboxylated URM1 onto the uridine of tRNAs at wobble position. Prior mcm(5) tRNA modification by the elongator complex is required for 2-thiolation. May also be involved in protein urmylation. The sequence is that of Cytoplasmic tRNA 2-thiolation protein 2 from Vanderwaltozyma polyspora (strain ATCC 22028 / DSM 70294 / BCRC 21397 / CBS 2163 / NBRC 10782 / NRRL Y-8283 / UCD 57-17) (Kluyveromyces polysporus).